We begin with the raw amino-acid sequence, 49 residues long: Large ribosomal subunit protein bL33 (49 aa).

The protein belongs to the bacterial ribosomal protein bL33 family.

The chain is Large ribosomal subunit protein bL33 from Lacticaseibacillus casei (strain BL23) (Lactobacillus casei).